Here is a 125-residue protein sequence, read N- to C-terminus: MKFILIAIGGAFGALFRYFVSKVFNTHFPFNYIPLGTVIVNVLGAFLLSFVLFSSIERFEVNPNFVLFFGTGFLGAFTTFSTFAYETLSLFLTSPFRALVYFFANLFFGFFAAFFGMVLGRGKFL.

Transmembrane regions (helical) follow at residues 3–23, 33–53, 65–85, and 99–119; these read FILIAIGGAFGALFRYFVSKV, IPLGTVIVNVLGAFLLSFVLF, FVLFFGTGFLGAFTTFSTFAY, and LVYFFANLFFGFFAAFFGMVL. 2 residues coordinate Na(+): G75 and T78.

It belongs to the fluoride channel Fluc/FEX (TC 1.A.43) family.

It localises to the cell inner membrane. It catalyses the reaction fluoride(in) = fluoride(out). Its activity is regulated as follows. Na(+) is not transported, but it plays an essential structural role and its presence is essential for fluoride channel function. Fluoride-specific ion channel. Important for reducing fluoride concentration in the cell, thus reducing its toxicity. The sequence is that of Fluoride-specific ion channel FluC from Thermosipho melanesiensis (strain DSM 12029 / CIP 104789 / BI429).